A 758-amino-acid polypeptide reads, in one-letter code: Matrix metalloproteinase-2 (758 aa).

The N-terminal stretch at 1-17 is a signal peptide; the sequence is MFSKYVLATLLALFAQS. His-257 is a Zn(2+) binding site. Glu-258 is an active-site residue. Zn(2+) is bound by residues His-261 and His-267. A disordered region spans residues 335–514; that stretch reads AYWPWNNPSN…HNKPRKPKPD (180 aa). Residues 338 to 348 show a composition bias toward low complexity; the sequence is PWNNPSNNPNN. Positions 349–476 are enriched in basic and acidic residues; that stretch reads DRNRARERQE…EWERRNRNGA (128 aa). The segment covering 479–494 has biased composition (low complexity); it reads PVTPTANTTPRPTNKP. Over residues 499–510 the composition is skewed to basic residues; the sequence is HRQHHHHNKPRK. Hemopexin repeat units lie at residues 513-561, 565-610, 612-659, and 660-707; these read PDSC…WSAL, LTKV…GLPP, LTHI…WSGV, and GYNI…WMQC. Cys-516 and Cys-707 are joined by a disulfide. Residues 739–756 traverse the membrane as a helical segment; that stretch reads LRINHFILSILLLAIANW. The Cytoplasmic portion of the chain corresponds to 757–758; it reads RS.

It belongs to the peptidase M10A family. The cofactor is Ca(2+). Requires Zn(2+) as cofactor. In terms of tissue distribution, widely expressed during embryogenesis including in the mesoderm, developing gut, central and peripheral nervous systems and imaginal disks. In the embryonic nervous system, expressed in neurons and glia. In third instar larvae, strongly expressed in the morphogenetic furrow of eye imaginal disks and in the optic lobe region of the brain. Expressed in posterior follicle cells in all mature stage 14 follicles but not in earlier follicles and is also expressed in some anterior follicle cells that help form dorsal eggshell structures.

It localises to the cell membrane. Functionally, has metalloproteinase activity. Proteolytically cleaves the PGRP-LC receptor; involved in gut-fat body innate immunological communication (GFIC)-mediated activation of the imd/Relish signal transduction pathway. Required for larval tissue histolysis during metamorphosis and is involved in pupal head eversion and fusion of the wing imaginal tissue. Required for growth of the dorsal air sac primordium and development of the dorsal air sacs. Promotes embryonic motor axon fasciculation. Cleaves and activates frac to promote motor axon bundling during outgrowth. Promotes the reshaping of adult sensory neuron dendrites from a radial to lattice-like shape which occurs after eclosion by degrading the basement membrane on which the dendrites grow. Involved in inhibition of follicle stem cell proliferation by cleaving Dlp, inhibiting its interaction with wg and preventing Dlp-mediated spreading of wg to follicle stem cells to enhance their proliferation. Plays a role in wound healing. Involved in fat body dissociation which occurs during metamorphosis by degrading basement membrane components, leading to destruction of cell-basement membrane junctions. Required for posterior follicle cell degradation and ovulation. In Drosophila melanogaster (Fruit fly), this protein is Matrix metalloproteinase-2.